The chain runs to 477 residues: Ribulose bisphosphate carboxylase large chain (477 aa).

A propeptide spanning residues 1-2 (MS) is cleaved from the precursor. An N-acetylproline modification is found at Pro-3. Lys-14 bears the N6,N6,N6-trimethyllysine mark. Substrate is bound by residues Asn-123 and Thr-173. The active-site Proton acceptor is the Lys-175. Lys-177 contributes to the substrate binding site. Residues Lys-201, Asp-203, and Glu-204 each coordinate Mg(2+). The residue at position 201 (Lys-201) is an N6-carboxylysine. Residue His-294 is the Proton acceptor of the active site. The substrate site is built by Arg-295, His-327, and Ser-379.

This sequence belongs to the RuBisCO large chain family. Type I subfamily. Heterohexadecamer of 8 large chains and 8 small chains; disulfide-linked. The disulfide link is formed within the large subunit homodimers. It depends on Mg(2+) as a cofactor. The disulfide bond which can form in the large chain dimeric partners within the hexadecamer appears to be associated with oxidative stress and protein turnover.

Its subcellular location is the plastid. It is found in the chloroplast. The enzyme catalyses 2 (2R)-3-phosphoglycerate + 2 H(+) = D-ribulose 1,5-bisphosphate + CO2 + H2O. The catalysed reaction is D-ribulose 1,5-bisphosphate + O2 = 2-phosphoglycolate + (2R)-3-phosphoglycerate + 2 H(+). Its function is as follows. RuBisCO catalyzes two reactions: the carboxylation of D-ribulose 1,5-bisphosphate, the primary event in carbon dioxide fixation, as well as the oxidative fragmentation of the pentose substrate in the photorespiration process. Both reactions occur simultaneously and in competition at the same active site. In Nicotiana debneyi (Debney's tobacco), this protein is Ribulose bisphosphate carboxylase large chain.